A 391-amino-acid polypeptide reads, in one-letter code: Coproporphyrin III ferrochelatase (391 aa).

S79 and Y148 together coordinate Fe-coproporphyrin III. Fe(2+)-binding residues include H211 and E305.

It belongs to the ferrochelatase family.

Its subcellular location is the cytoplasm. It catalyses the reaction Fe-coproporphyrin III + 2 H(+) = coproporphyrin III + Fe(2+). It functions in the pathway porphyrin-containing compound metabolism; protoheme biosynthesis. In terms of biological role, involved in coproporphyrin-dependent heme b biosynthesis. Catalyzes the insertion of ferrous iron into coproporphyrin III to form Fe-coproporphyrin III. The polypeptide is Coproporphyrin III ferrochelatase (Tropheryma whipplei (strain TW08/27) (Whipple's bacillus)).